We begin with the raw amino-acid sequence, 267 residues long: Small ribosomal subunit protein eS4 (267 aa).

The S4 RNA-binding domain maps to 42–104 (LPLILVLRNR…TKENFRLLFD (63 aa)).

This sequence belongs to the eukaryotic ribosomal protein eS4 family.

It localises to the cytoplasm. This chain is Small ribosomal subunit protein eS4 (rps4), found in Dictyostelium discoideum (Social amoeba).